The chain runs to 539 residues: Chaperonin GroEL 2 (539 aa).

ATP is bound by residues Thr-29–Pro-32, Asp-86–Thr-90, Gly-414, Asp-479–Leu-481, and Asp-495.

It belongs to the chaperonin (HSP60) family. In terms of assembly, forms a cylinder of 14 subunits composed of two heptameric rings stacked back-to-back. Interacts with the co-chaperonin GroES.

The protein resides in the cytoplasm. It carries out the reaction ATP + H2O + a folded polypeptide = ADP + phosphate + an unfolded polypeptide.. In terms of biological role, together with its co-chaperonin GroES, plays an essential role in assisting protein folding. The GroEL-GroES system forms a nano-cage that allows encapsulation of the non-native substrate proteins and provides a physical environment optimized to promote and accelerate protein folding. This Synechococcus sp. (strain JA-2-3B'a(2-13)) (Cyanobacteria bacterium Yellowstone B-Prime) protein is Chaperonin GroEL 2.